The following is a 136-amino-acid chain: Protein K5 (136 aa).

This sequence belongs to the poxviridae K5 protein family.

This Homo sapiens (Human) protein is Protein K5.